A 463-amino-acid chain; its full sequence is L-2-hydroxyglutarate dehydrogenase, mitochondrial (463 aa).

A mitochondrion-targeting transit peptide spans M1–I51. N6-acetyllysine occurs at positions 104, 155, and 173.

It belongs to the L2HGDH family. FAD serves as cofactor. As to expression, widely expressed. Highly expressed in brain, testis and muscle. Expressed to a lower extent in lymphocytes, fibroblasts, keratinocytes, placenta, bladder, small intestine, liver and bone marrow.

The protein resides in the mitochondrion. It carries out the reaction (S)-2-hydroxyglutarate + A = 2-oxoglutarate + AH2. This Homo sapiens (Human) protein is L-2-hydroxyglutarate dehydrogenase, mitochondrial (L2HGDH).